We begin with the raw amino-acid sequence, 192 residues long: MIRFEIHGDNLTITDAIRNYIEDKIGKLERYFNDVPNAVAHVKVKTYQNSTTKIEVTIPLKNVTLRAEERHDDLYAGIDLVTSKLERQVRKYKTRVNRKHKTHGEPEAFVAEVQEAPPENVDDVNAEPTNDSEIEIIRSKQFSLKPMDSEEAVLQMELLGHDFYIFTDRETDGTSIVYKRKDGKYGLIETTE.

The segment at 95 to 129 (RVNRKHKTHGEPEAFVAEVQEAPPENVDDVNAEPT) is disordered. Residues 120–129 (NVDDVNAEPT) show a composition bias toward acidic residues.

Belongs to the HPF/YfiA ribosome-associated protein family. Long HPF subfamily. In terms of assembly, interacts with 100S ribosomes.

It is found in the cytoplasm. Functionally, required for dimerization of active 70S ribosomes into 100S ribosomes in stationary phase; 100S ribosomes are translationally inactive and sometimes present during exponential growth. The protein is Ribosome hibernation promotion factor of Staphylococcus haemolyticus (strain JCSC1435).